We begin with the raw amino-acid sequence, 283 residues long: 4-diphosphocytidyl-2-C-methyl-D-erythritol kinase (283 aa).

Lysine 10 is an active-site residue. An ATP-binding site is contributed by proline 99 to serine 109. Aspartate 141 is a catalytic residue.

The protein belongs to the GHMP kinase family. IspE subfamily. As to quaternary structure, homodimer.

The catalysed reaction is 4-CDP-2-C-methyl-D-erythritol + ATP = 4-CDP-2-C-methyl-D-erythritol 2-phosphate + ADP + H(+). The protein operates within isoprenoid biosynthesis; isopentenyl diphosphate biosynthesis via DXP pathway; isopentenyl diphosphate from 1-deoxy-D-xylulose 5-phosphate: step 3/6. Functionally, catalyzes the phosphorylation of the position 2 hydroxy group of 4-diphosphocytidyl-2C-methyl-D-erythritol. This chain is 4-diphosphocytidyl-2-C-methyl-D-erythritol kinase, found in Citrobacter koseri (strain ATCC BAA-895 / CDC 4225-83 / SGSC4696).